The primary structure comprises 216 residues: Uracil phosphoribosyltransferase (216 aa).

30–34 (KNLVK) is a GTP binding site. 5-phospho-alpha-D-ribose 1-diphosphate contacts are provided by residues Arg-80, Arg-105, and 140 to 148 (DPMIATGST). Uracil contacts are provided by residues Ile-203 and 208–210 (GDA). 5-phospho-alpha-D-ribose 1-diphosphate is bound at residue Asp-209.

This sequence belongs to the UPRTase family. The cofactor is Mg(2+).

It carries out the reaction UMP + diphosphate = 5-phospho-alpha-D-ribose 1-diphosphate + uracil. It functions in the pathway pyrimidine metabolism; UMP biosynthesis via salvage pathway; UMP from uracil: step 1/1. Allosterically activated by GTP. Its function is as follows. Catalyzes the conversion of uracil and 5-phospho-alpha-D-ribose 1-diphosphate (PRPP) to UMP and diphosphate. The polypeptide is Uracil phosphoribosyltransferase (Sulfolobus acidocaldarius (strain ATCC 33909 / DSM 639 / JCM 8929 / NBRC 15157 / NCIMB 11770)).